The sequence spans 127 residues: Large ribosomal subunit protein bL12 (127 aa).

It belongs to the bacterial ribosomal protein bL12 family. As to quaternary structure, homodimer. Part of the ribosomal stalk of the 50S ribosomal subunit. Forms a multimeric L10(L12)X complex, where L10 forms an elongated spine to which 2 to 4 L12 dimers bind in a sequential fashion. Binds GTP-bound translation factors.

Its function is as follows. Forms part of the ribosomal stalk which helps the ribosome interact with GTP-bound translation factors. Is thus essential for accurate translation. The polypeptide is Large ribosomal subunit protein bL12 (Pelobacter propionicus (strain DSM 2379 / NBRC 103807 / OttBd1)).